The following is a 133-amino-acid chain: Ribosome-binding factor A (133 aa).

The protein belongs to the RbfA family. As to quaternary structure, monomer. Binds 30S ribosomal subunits, but not 50S ribosomal subunits or 70S ribosomes.

It is found in the cytoplasm. In terms of biological role, one of several proteins that assist in the late maturation steps of the functional core of the 30S ribosomal subunit. Associates with free 30S ribosomal subunits (but not with 30S subunits that are part of 70S ribosomes or polysomes). Required for efficient processing of 16S rRNA. May interact with the 5'-terminal helix region of 16S rRNA. This chain is Ribosome-binding factor A, found in Trichormus variabilis (strain ATCC 29413 / PCC 7937) (Anabaena variabilis).